Consider the following 176-residue polypeptide: Tubulin polymerization-promoting protein family member 3 (176 aa).

Ala-2 carries the N-acetylalanine modification.

The protein belongs to the TPPP family.

The protein resides in the cytoplasm. It localises to the cytoskeleton. Functionally, regulator of microtubule dynamic that has microtubule bundling activity. Required for embryo implantation; possibly by regulating beta-catenin. Also required for decidualization via regulation of beta-catenin. This chain is Tubulin polymerization-promoting protein family member 3 (TPPP3), found in Bos taurus (Bovine).